The primary structure comprises 466 residues: Asparagine--tRNA ligase (466 aa).

This sequence belongs to the class-II aminoacyl-tRNA synthetase family. Homodimer.

The protein resides in the cytoplasm. It carries out the reaction tRNA(Asn) + L-asparagine + ATP = L-asparaginyl-tRNA(Asn) + AMP + diphosphate + H(+). The polypeptide is Asparagine--tRNA ligase (Enterobacter sp. (strain 638)).